The following is a 337-amino-acid chain: Histidine N-acetyltransferase (337 aa).

The propeptide at 1 to 2 is removed in mature form; it reads MK. Positions 21 to 156 constitute an N-acetyltransferase domain; the sequence is LQFAVATEED…QGILLVRFRA (136 aa).

The enzyme catalyses L-histidine + acetyl-CoA = N(alpha)-acetyl-L-histidine + CoA + H(+). Functionally, enzyme responsible for the N-acetyl-histidine (NAH) synthesis, which is a major constituent of brain and lens of ectothermic vertebrates. This Scomber australasicus (Blue mackerel) protein is Histidine N-acetyltransferase (hisat).